The following is a 639-amino-acid chain: Serine protease HtrA-like (639 aa).

Composition is skewed to basic and acidic residues over residues 1–13 (MDND…PREQ), 21–75 (YFHN…EIHQ), 106–187 (QQLK…KESS), and 195–205 (KSQKIEQKEQK). Residues 1–262 (MDNDKKHVIP…LENEPKNNDT (262 aa)) form a disordered region. Over residues 206–219 (ASSNETSNKELNSY) the composition is skewed to polar residues. Basic and acidic residues-rich tracts occupy residues 220 to 235 (TKDK…DLKK) and 245 to 262 (NKLE…NNDT). The chain crosses the membrane as a helical span at residues 277–297 (IVIVVAIILIVILISAIISTM). Catalysis depends on charge relay system residues histidine 374, aspartate 404, and serine 489. Residues 527 to 629 (EIAEELEKKG…TLSAKIYREG (103 aa)) form the PDZ domain.

It belongs to the peptidase S1C family.

The protein resides in the cell membrane. This is Serine protease HtrA-like from Staphylococcus haemolyticus (strain JCSC1435).